A 447-amino-acid polypeptide reads, in one-letter code: NAD-dependent histone deacetylase HST3 (447 aa).

The segment at 1–21 (MTSVSPSPPASRSGSMCSDLP) is disordered. Residues 35–363 (LDADDEVLRR…IKKLRQLKRE (329 aa)) form the Deacetylase sirtuin-type domain. NAD(+) is bound by residues 60 to 79 (GAGISCNAGIPDFRSSDGLY) and 151 to 154 (QNID). His187 acts as the Proton acceptor in catalysis. Residues Cys195, Cys198, Cys220, and Cys223 each coordinate Zn(2+). NAD(+) contacts are provided by residues 282–284 (GTS), 312–314 (NKT), and Cys333. Residues 365-375 (SDLRKQMKAQK) show a composition bias toward basic and acidic residues. Disordered regions lie at residues 365–393 (SDLRKQMKAQKDSIGTPPTTPLRTAQGID) and 411–447 (KRKILSPENSSEEDEEENLDTRKRAKIRPTFGDNQAS).

This sequence belongs to the sirtuin family. Class I subfamily. Requires Zn(2+) as cofactor.

The protein localises to the cytoplasm. It localises to the nucleus. The enzyme catalyses N(6)-acetyl-L-lysyl-[protein] + NAD(+) + H2O = 2''-O-acetyl-ADP-D-ribose + nicotinamide + L-lysyl-[protein]. Functionally, NAD-dependent histone deacetylase, which contributes together with HST4 to histone H3 'Lys-56' deacetylation, regulation of telomeric silencing, proper cell cycle progression, DNA damage control, DNA recombination, and genomic maintenance. This Saccharomyces cerevisiae (strain ATCC 204508 / S288c) (Baker's yeast) protein is NAD-dependent histone deacetylase HST3 (HST3).